Here is a 181-residue protein sequence, read N- to C-terminus: MGYEKPQIRSTTVIGIIRDGKAALGSDGQMTLGNTVMKHSTRKIRSLYQGRFITGFAGATADALTLLDRFESKLEAYSGKLDRAAVELAKDWRTDKYLRRLEAMLAVVSTDKALIISGTGDVIEPEDGIVAIGSGSMYALAAARSLMKHTTLSAEEIVRESLQIAADICIYTNDHIVIETL.

Thr11 is a catalytic residue. Positions 166, 169, and 172 each coordinate Na(+).

The protein belongs to the peptidase T1B family. HslV subfamily. A double ring-shaped homohexamer of HslV is capped on each side by a ring-shaped HslU homohexamer. The assembly of the HslU/HslV complex is dependent on binding of ATP.

The protein localises to the cytoplasm. It carries out the reaction ATP-dependent cleavage of peptide bonds with broad specificity.. Its activity is regulated as follows. Allosterically activated by HslU binding. Functionally, protease subunit of a proteasome-like degradation complex believed to be a general protein degrading machinery. The protein is ATP-dependent protease subunit HslV of Chlorobaculum tepidum (strain ATCC 49652 / DSM 12025 / NBRC 103806 / TLS) (Chlorobium tepidum).